Reading from the N-terminus, the 180-residue chain is Peroxisome assembly protein 22 (180 aa).

Residues 15 to 32 form a helical membrane-spanning segment; sequence LGIVGTAIAVLVTSYYIY.

This sequence belongs to the peroxin-22 family.

The protein localises to the peroxisome membrane. Functionally, involved in peroxisome biogenesis. The polypeptide is Peroxisome assembly protein 22 (PEX22) (Saccharomyces cerevisiae (strain ATCC 204508 / S288c) (Baker's yeast)).